A 425-amino-acid chain; its full sequence is Xylose isomerase (425 aa).

Residues H101 and D104 contribute to the active site. Residues E232, E268, H271, D296, D307, D309, and D339 each contribute to the Mg(2+) site.

This sequence belongs to the xylose isomerase family. Homotetramer. It depends on Mg(2+) as a cofactor.

The protein resides in the cytoplasm. The enzyme catalyses alpha-D-xylose = alpha-D-xylulofuranose. This Salmonella paratyphi A (strain ATCC 9150 / SARB42) protein is Xylose isomerase.